A 757-amino-acid chain; its full sequence is Endonuclease MutS2 (757 aa).

321 to 328 (GPNMGGKT) provides a ligand contact to ATP. The 76-residue stretch at 681-756 (IDIRGMTVEE…GTGVTVVEVK (76 aa)) folds into the Smr domain.

Belongs to the DNA mismatch repair MutS family. MutS2 subfamily. In terms of assembly, homodimer. Binds to stalled ribosomes, contacting rRNA. Interacts with MutL.

With respect to regulation, nuclease activity is stimulated by interaction with MutL and inhibited in the presence of non-hydrolytic ATP (ADPnP). ATPase activity is stimulated by DNA. In terms of biological role, endonuclease that is involved in the suppression of homologous recombination and thus may have a key role in the control of bacterial genetic diversity. Has ATPase activity. Binds to DNA. Acts as a ribosome collision sensor, splitting the ribosome into its 2 subunits. Detects stalled/collided 70S ribosomes which it binds and splits by an ATP-hydrolysis driven conformational change. Acts upstream of the ribosome quality control system (RQC), a ribosome-associated complex that mediates the extraction of incompletely synthesized nascent chains from stalled ribosomes and their subsequent degradation. Probably generates substrates for RQC. This Thermotoga maritima (strain ATCC 43589 / DSM 3109 / JCM 10099 / NBRC 100826 / MSB8) protein is Endonuclease MutS2.